The chain runs to 360 residues: Olfactory receptor 1L1 (360 aa).

The Extracellular segment spans residues 1–75; the sequence is MERNHNPDNC…GLSSRPEDQK (75 aa). N55 carries an N-linked (GlcNAc...) asparagine glycan. Residues 76-99 traverse the membrane as a helical segment; that stretch reads PLFAVFLPIYLITVIGNLLIILAI. Residues 100–107 are Cytoplasmic-facing; sequence RSDTRLQT. The chain crosses the membrane as a helical span at residues 108-129; the sequence is PMYFFLSILSFVDICYVTVIIP. Topologically, residues 130 to 150 are extracellular; the sequence is KMLVNFLSETKTISYSECLTQ. A disulfide bridge links C147 with C239. Residues 151–170 form a helical membrane-spanning segment; the sequence is MYFFLAFGNTDSYLLAAMAI. At 171-189 the chain is on the cytoplasmic side; the sequence is DRYVAICNPFHYITIMSHR. Residues 190 to 208 form a helical membrane-spanning segment; it reads CCVLLLVLSFCIPHFHSLL. The Extracellular portion of the chain corresponds to 209–246; it reads HILLTNQLIFCASNVIHHFFCDDQPVLKLSCSSHFVKE. The helical transmembrane segment at 247–269 threads the bilayer; it reads ITVMTEGLAVIMTPFSCIIISYL. Residues 270–286 are Cytoplasmic-facing; sequence RILITVLKIPSAAGKRK. A helical membrane pass occupies residues 287-309; sequence AFSTCGSHLTVVTLFYGSISYLY. At 310–321 the chain is on the extracellular side; the sequence is FQPLSNYTVKDQ. N-linked (GlcNAc...) asparagine glycosylation occurs at N315. Residues 322–341 traverse the membrane as a helical segment; it reads IATIIYTVLTPMLNPFIYSL. The Cytoplasmic portion of the chain corresponds to 342–360; that stretch reads RNKDMKQGLAKLMHRMKCQ.

The protein belongs to the G-protein coupled receptor 1 family.

The protein localises to the cell membrane. Odorant receptor. This Homo sapiens (Human) protein is Olfactory receptor 1L1 (OR1L1).